A 339-amino-acid chain; its full sequence is Anthranilate phosphoribosyltransferase (339 aa).

5-phospho-alpha-D-ribose 1-diphosphate-binding positions include G79, 82-83, T87, 89-92, 107-115, and S119; these read GD, NVST, and KHGNRAVSS. Position 79 (G79) interacts with anthranilate. S91 contributes to the Mg(2+) binding site. N110 lines the anthranilate pocket. An anthranilate-binding site is contributed by R165. 2 residues coordinate Mg(2+): D224 and E225.

The protein belongs to the anthranilate phosphoribosyltransferase family. As to quaternary structure, homodimer. Requires Mg(2+) as cofactor.

It catalyses the reaction N-(5-phospho-beta-D-ribosyl)anthranilate + diphosphate = 5-phospho-alpha-D-ribose 1-diphosphate + anthranilate. It functions in the pathway amino-acid biosynthesis; L-tryptophan biosynthesis; L-tryptophan from chorismate: step 2/5. Functionally, catalyzes the transfer of the phosphoribosyl group of 5-phosphorylribose-1-pyrophosphate (PRPP) to anthranilate to yield N-(5'-phosphoribosyl)-anthranilate (PRA). This is Anthranilate phosphoribosyltransferase from Geobacillus kaustophilus (strain HTA426).